The primary structure comprises 212 residues: Pyridoxine/pyridoxamine 5'-phosphate oxidase (212 aa).

Residues 7–10 (RREY) and lysine 66 contribute to the substrate site. FMN-binding positions include 61-66 (RIVLLK), 76-77 (YT), lysine 83, and glutamine 105. 3 residues coordinate substrate: tyrosine 123, arginine 127, and serine 131. FMN is bound by residues 140 to 141 (QS) and tryptophan 185. Residue 191–193 (RLH) coordinates substrate. Arginine 195 lines the FMN pocket.

Belongs to the pyridoxamine 5'-phosphate oxidase family. In terms of assembly, homodimer. FMN is required as a cofactor.

The catalysed reaction is pyridoxamine 5'-phosphate + O2 + H2O = pyridoxal 5'-phosphate + H2O2 + NH4(+). It catalyses the reaction pyridoxine 5'-phosphate + O2 = pyridoxal 5'-phosphate + H2O2. It participates in cofactor metabolism; pyridoxal 5'-phosphate salvage; pyridoxal 5'-phosphate from pyridoxamine 5'-phosphate: step 1/1. Its pathway is cofactor metabolism; pyridoxal 5'-phosphate salvage; pyridoxal 5'-phosphate from pyridoxine 5'-phosphate: step 1/1. Functionally, catalyzes the oxidation of either pyridoxine 5'-phosphate (PNP) or pyridoxamine 5'-phosphate (PMP) into pyridoxal 5'-phosphate (PLP). The chain is Pyridoxine/pyridoxamine 5'-phosphate oxidase from Idiomarina loihiensis (strain ATCC BAA-735 / DSM 15497 / L2-TR).